We begin with the raw amino-acid sequence, 230 residues long: Cytochrome c oxidase subunit 2 (230 aa).

The Mitochondrial intermembrane segment spans residues 1–14 (MAHPTQLGFKDAAM). A helical transmembrane segment spans residues 15–45 (PVMEELLHFHDHALMIVLLISTLVLYIITAM). Over 46–59 (VSTKLTNKYILDSQ) the chain is Mitochondrial matrix. Residues 60–87 (EIEIVWTILPAVILVLIALPSLRILYLM) traverse the membrane as a helical segment. Residues 88 to 230 (DEINDPHLTI…NWSSLMLEDA (143 aa)) lie on the Mitochondrial intermembrane side of the membrane. His-161, Cys-196, Glu-198, Cys-200, His-204, and Met-207 together coordinate Cu cation. Mg(2+) is bound at residue Glu-198.

It belongs to the cytochrome c oxidase subunit 2 family. In terms of assembly, component of the cytochrome c oxidase (complex IV, CIV), a multisubunit enzyme composed of 14 subunits. The complex is composed of a catalytic core of 3 subunits MT-CO1, MT-CO2 and MT-CO3, encoded in the mitochondrial DNA, and 11 supernumerary subunits COX4I, COX5A, COX5B, COX6A, COX6B, COX6C, COX7A, COX7B, COX7C, COX8 and NDUFA4, which are encoded in the nuclear genome. The complex exists as a monomer or a dimer and forms supercomplexes (SCs) in the inner mitochondrial membrane with NADH-ubiquinone oxidoreductase (complex I, CI) and ubiquinol-cytochrome c oxidoreductase (cytochrome b-c1 complex, complex III, CIII), resulting in different assemblies (supercomplex SCI(1)III(2)IV(1) and megacomplex MCI(2)III(2)IV(2)). Found in a complex with TMEM177, COA6, COX18, COX20, SCO1 and SCO2. Interacts with TMEM177 in a COX20-dependent manner. Interacts with COX20. Interacts with COX16. The cofactor is Cu cation.

Its subcellular location is the mitochondrion inner membrane. The catalysed reaction is 4 Fe(II)-[cytochrome c] + O2 + 8 H(+)(in) = 4 Fe(III)-[cytochrome c] + 2 H2O + 4 H(+)(out). Functionally, component of the cytochrome c oxidase, the last enzyme in the mitochondrial electron transport chain which drives oxidative phosphorylation. The respiratory chain contains 3 multisubunit complexes succinate dehydrogenase (complex II, CII), ubiquinol-cytochrome c oxidoreductase (cytochrome b-c1 complex, complex III, CIII) and cytochrome c oxidase (complex IV, CIV), that cooperate to transfer electrons derived from NADH and succinate to molecular oxygen, creating an electrochemical gradient over the inner membrane that drives transmembrane transport and the ATP synthase. Cytochrome c oxidase is the component of the respiratory chain that catalyzes the reduction of oxygen to water. Electrons originating from reduced cytochrome c in the intermembrane space (IMS) are transferred via the dinuclear copper A center (CU(A)) of subunit 2 and heme A of subunit 1 to the active site in subunit 1, a binuclear center (BNC) formed by heme A3 and copper B (CU(B)). The BNC reduces molecular oxygen to 2 water molecules using 4 electrons from cytochrome c in the IMS and 4 protons from the mitochondrial matrix. This is Cytochrome c oxidase subunit 2 (mt-co2) from Cyprinus carpio (Common carp).